Here is a 696-residue protein sequence, read N- to C-terminus: Two-component response regulator ORR22 (696 aa).

The Response regulatory domain maps to 27–142 (RVLAVDDDPV…ELRNIWQHVV (116 aa)). Residue D78 is modified to 4-aspartylphosphate. The tract at residues 154–214 (LDFSKECNKP…DYQENDEPSA (61 aa)) is disordered. The segment covering 176 to 185 (TCGSSDQNGR) has biased composition (polar residues). Residues 195–211 (GEDDDEGDDNDYQENDE) show a composition bias toward acidic residues. Positions 214-273 (AAKKPRVVWSVELHRKFVAAVNQLGIDKAVPKRILELMNVEKLTRENVASHLQKYRLYLK) form a DNA-binding region, myb-like GARP.

The protein belongs to the ARR family. Type-B subfamily. Post-translationally, two-component system major event consists of a His-to-Asp phosphorelay between a sensor histidine kinase (HK) and a response regulator (RR). In plants, the His-to-Asp phosphorelay involves an additional intermediate named Histidine-containing phosphotransfer protein (HPt). This multistep phosphorelay consists of a His-Asp-His-Asp sequential transfer of a phosphate group between first a His and an Asp of the HK protein, followed by the transfer to a conserved His of the HPt protein and finally the transfer to an Asp in the receiver domain of the RR protein.

Its subcellular location is the nucleus. Transcriptional activator that binds specific DNA sequence. Functions as a response regulator involved in His-to-Asp phosphorelay signal transduction system. Phosphorylation of the Asp residue in the receiver domain activates the ability of the protein to promote the transcription of target genes. May directly activate some type-A response regulators in response to cytokinins. The chain is Two-component response regulator ORR22 from Oryza sativa subsp. indica (Rice).